The following is a 250-amino-acid chain: MENTIVVKLGGVASDNLTEDFFQQIIQWQAANKKIVLVHGGGHYITKMMKSLAIPVETKNGLRVTNKATLEVTKMVLIGQVQPAITTAFQKRNISVIGLNAGDTGLLEADFLNDANLGFVGKITKVKTDLIEQLLSENIITVIAPLGINSEYDWLNVNADTAACEVASALQAEALYLLTDVPGVKKGSEIIGEIATDEIEKLQNAGVIKGGMIPKLASAAFAAENGVGKVIITDSLNTSGTKIKNKVAIG.

Substrate is bound by residues 41–42 (GG), arginine 63, and asparagine 156.

Belongs to the acetylglutamate kinase family. ArgB subfamily.

It localises to the cytoplasm. The enzyme catalyses N-acetyl-L-glutamate + ATP = N-acetyl-L-glutamyl 5-phosphate + ADP. It participates in amino-acid biosynthesis; L-arginine biosynthesis; N(2)-acetyl-L-ornithine from L-glutamate: step 2/4. Its function is as follows. Catalyzes the ATP-dependent phosphorylation of N-acetyl-L-glutamate. The sequence is that of Acetylglutamate kinase from Listeria monocytogenes serotype 4b (strain F2365).